Reading from the N-terminus, the 315-residue chain is Borealin (315 aa).

Disordered stretches follow at residues isoleucine 103 to glycine 126 and leucine 138 to methionine 226. At threonine 146 the chain carries Phosphothreonine. Serine 152 is subject to Phosphoserine. Over residues alanine 153–arginine 162 the composition is skewed to basic residues. At serine 163 the chain carries Phosphoserine. Over residues serine 178–asparagine 188 the composition is skewed to low complexity. Residue serine 205 is modified to Phosphoserine. Threonine 209 is subject to Phosphothreonine. 3 positions are modified to phosphoserine: serine 218, serine 220, and serine 244.

This sequence belongs to the borealin family. As to quaternary structure, component of the CPC complex. In terms of tissue distribution, ubiquitously expressed in the early embryo. Expression is restricted to the ventral nerve cord and brain during later embryonic stages.

It localises to the nucleus. It is found in the chromosome. Its subcellular location is the centromere. The protein localises to the cytoplasm. The protein resides in the cytoskeleton. It localises to the spindle. Functionally, component of the chromosomal passenger complex (CPC), a complex that acts as a key regulator of embryonic mitosis. The CPC complex has essential functions at the centromere for ensuring sister chromatid cohesion, recruitment of the CPC to kinetochores, and chromosome alignment and segregation. There is no function in meiotic histone phosphorylation or spindle formation. In Drosophila melanogaster (Fruit fly), this protein is Borealin (borr).